The following is a 427-amino-acid chain: Peptidyl-prolyl cis-trans isomerase sig-7 (427 aa).

The PPIase cyclophilin-type domain occupies 6 to 161 (ETTLGDLIID…KDIRISHTIV (156 aa)). A coiled-coil region spans residues 195–227 (DEKEDEDEGKTAEEIAEELQQREMAEQAQILEM). The RRM domain maps to 241-319 (NVLFVCKLNP…RRIHVDFSQS (79 aa)). Residues 322-334 (QNYKYKPKSQQQE) are compositionally biased toward polar residues. Positions 322–427 (QNYKYKPKSQ…RSPDRRRDRR (106 aa)) are disordered. Positions 351 to 370 (SHQRSPSPRRRRSPSPKKDK) are enriched in basic residues. The segment covering 384–427 (SSDNHRDRDRSYRDNNRDRRDNHRDSDRDRRRHDRSPDRRRDRR) has biased composition (basic and acidic residues).

Belongs to the cyclophilin-type PPIase family. PPIL4 subfamily. Interacts with ama-1, the catalytic subunit of the RNA polymerase II (RNA pol II) complex. As to expression, ubiquitous.

The protein localises to the nucleus. It is found in the nucleoplasm. The protein resides in the chromosome. The catalysed reaction is [protein]-peptidylproline (omega=180) = [protein]-peptidylproline (omega=0). Probable PPIase that accelerates the folding of proteins. It catalyzes the cis-trans isomerization of proline imidic peptide bonds in oligopeptides. Involved in RNA polymerase II (RNA pol II)-mediated transcription elongation, and in primary transcript splicing, including co-transcriptional trans-splicing, in association with the catalytic subunit of the RNA pol II complex ama-1. Also plays a role in the regulation of elongation-dependent phosphorylation of ama-1 to control transcription. Involved in the transcription of several genes during embryogenesis and in particular, of genes related to developmental processes such as gastrulation, and also regulates transcription in germ cells from embryogenesis to adulthood. The polypeptide is Peptidyl-prolyl cis-trans isomerase sig-7 (Caenorhabditis elegans).